The primary structure comprises 59 residues: Alpha-conotoxin CIA (59 aa).

The signal sequence occupies residues M1–S16. The propeptide occupies F17–R42. 2 cysteine pairs are disulfide-bonded: C46/C51 and C47/C57. At C57 the chain carries Cysteine amide.

Belongs to the conotoxin A superfamily. Expressed by the venom duct.

The protein resides in the secreted. In terms of biological role, alpha-conotoxins act on postsynaptic membranes, they bind to the nicotinic acetylcholine receptors (nAChR) and thus inhibit them. This toxin blocks the rat muscle nAChRs alpha-1-beta-1-gamma-delta (CHRNA1-CHRNB1-CHRNG-CHRND) (IC(50)=5.7 nM) and the rat neuronal nAChR alpha-3-beta-2/CHRNA3-CHRNB2 (IC(50)=2060 nM). In vivo, intramuscular injection into zebrafish produces rapid flaccid paralysis. This is Alpha-conotoxin CIA from Conus catus (Cat cone).